The chain runs to 125 residues: Glycine cleavage system H protein (125 aa).

Residues 21 to 103 form the Lipoyl-binding domain; it reads SVTIGISNQA…YSAGWIVKIK (83 aa). Lys-62 carries the N6-lipoyllysine modification.

The protein belongs to the GcvH family. The glycine cleavage system is composed of four proteins: P, T, L and H. Requires (R)-lipoate as cofactor.

Functionally, the glycine cleavage system catalyzes the degradation of glycine. The H protein shuttles the methylamine group of glycine from the P protein to the T protein. The chain is Glycine cleavage system H protein from Psychromonas ingrahamii (strain DSM 17664 / CCUG 51855 / 37).